The sequence spans 258 residues: Isoprenyl transferase (258 aa).

The active site involves Asp38. A Mg(2+)-binding site is contributed by Asp38. Residues 39–42 (GNGR), Trp43, Arg51, His55, and 83–85 (STE) contribute to the substrate site. Residue Asn86 is the Proton acceptor of the active site. Substrate contacts are provided by residues Trp87, Arg89, Arg206, and 212 to 214 (RIS). Glu225 provides a ligand contact to Mg(2+).

This sequence belongs to the UPP synthase family. Homodimer. Requires Mg(2+) as cofactor.

In terms of biological role, catalyzes the condensation of isopentenyl diphosphate (IPP) with allylic pyrophosphates generating different type of terpenoids. The protein is Isoprenyl transferase of Bacillus thuringiensis subsp. konkukian (strain 97-27).